Reading from the N-terminus, the 289-residue chain is Glycine--tRNA ligase alpha subunit (289 aa).

The protein belongs to the class-II aminoacyl-tRNA synthetase family. Tetramer of two alpha and two beta subunits.

It is found in the cytoplasm. It catalyses the reaction tRNA(Gly) + glycine + ATP = glycyl-tRNA(Gly) + AMP + diphosphate. The polypeptide is Glycine--tRNA ligase alpha subunit (Prochlorococcus marinus subsp. pastoris (strain CCMP1986 / NIES-2087 / MED4)).